We begin with the raw amino-acid sequence, 554 residues long: U4/U6 small nuclear ribonucleoprotein PRP4-like protein (554 aa).

A compositionally biased stretch (pro residues) spans 48 to 65 (APIPMMPHPPVARPPTFR). Residues 48–99 (APIPMMPHPPVARPPTFRPPVSQNGGVKTSDSDSESDDEHIEISEESKQVRE) are disordered. The segment covering 88–99 (IEISEESKQVRE) has biased composition (basic and acidic residues). WD repeat units lie at residues 253–292 (GDDR…NTIA), 296–335 (DHKE…LQTF), 337–376 (GHLD…ELLL), 379–418 (GHSR…SILV), 421–460 (GHIK…SLYI), 463–503 (AHAN…LVKS), and 506–545 (GHES…DEDE).

Its subcellular location is the nucleus speckle. Participates in pre-mRNA splicing. Part of the U4/U5/U6 tri-snRNP complex, one of the building blocks of the spliceosome. Essential for reproduction. In female gametophyte, is necessary for the egg cell and central cell fate determination and hence reproductive success. Involved in a mechanism that prevents accessory cells from adopting gametic cell fate. Modulates egg cell signaling center that regulates the development of all female gametophytic cells. The sequence is that of U4/U6 small nuclear ribonucleoprotein PRP4-like protein from Arabidopsis thaliana (Mouse-ear cress).